Consider the following 171-residue polypeptide: Shikimate kinase (171 aa).

14–19 (GAGKST) is a binding site for ATP. A Mg(2+)-binding site is contributed by Ser18. The substrate site is built by Asp36, Arg60, and Gly82. Arg120 is a binding site for ATP. Residue Arg139 coordinates substrate. Position 156 (Gln156) interacts with ATP.

The protein belongs to the shikimate kinase family. As to quaternary structure, monomer. Mg(2+) serves as cofactor.

It localises to the cytoplasm. The catalysed reaction is shikimate + ATP = 3-phosphoshikimate + ADP + H(+). It functions in the pathway metabolic intermediate biosynthesis; chorismate biosynthesis; chorismate from D-erythrose 4-phosphate and phosphoenolpyruvate: step 5/7. Catalyzes the specific phosphorylation of the 3-hydroxyl group of shikimic acid using ATP as a cosubstrate. The polypeptide is Shikimate kinase (Shewanella putrefaciens (strain CN-32 / ATCC BAA-453)).